The chain runs to 121 residues: Small ribosomal subunit protein uS13 (121 aa).

Residues 97-121 (VRGQRTRTNARTRRGARKTVAGKKK) form a disordered region. A compositionally biased stretch (basic residues) spans 100 to 121 (QRTRTNARTRRGARKTVAGKKK).

This sequence belongs to the universal ribosomal protein uS13 family. In terms of assembly, part of the 30S ribosomal subunit. Forms a loose heterodimer with protein S19. Forms two bridges to the 50S subunit in the 70S ribosome.

Functionally, located at the top of the head of the 30S subunit, it contacts several helices of the 16S rRNA. In the 70S ribosome it contacts the 23S rRNA (bridge B1a) and protein L5 of the 50S subunit (bridge B1b), connecting the 2 subunits; these bridges are implicated in subunit movement. Contacts the tRNAs in the A and P-sites. This is Small ribosomal subunit protein uS13 from Parasynechococcus marenigrum (strain WH8102).